The primary structure comprises 446 residues: Phosphoglucosamine mutase (446 aa).

Ser102 functions as the Phosphoserine intermediate in the catalytic mechanism. Mg(2+) is bound by residues Ser102, Asp241, Asp243, and Asp245. Ser102 is modified (phosphoserine).

It belongs to the phosphohexose mutase family. Mg(2+) is required as a cofactor. Activated by phosphorylation.

The enzyme catalyses alpha-D-glucosamine 1-phosphate = D-glucosamine 6-phosphate. In terms of biological role, catalyzes the conversion of glucosamine-6-phosphate to glucosamine-1-phosphate. The sequence is that of Phosphoglucosamine mutase from Yersinia enterocolitica serotype O:8 / biotype 1B (strain NCTC 13174 / 8081).